A 264-amino-acid chain; its full sequence is Tryptophan synthase alpha chain (264 aa).

Catalysis depends on proton acceptor residues glutamate 45 and aspartate 56.

This sequence belongs to the TrpA family. In terms of assembly, tetramer of two alpha and two beta chains.

The enzyme catalyses (1S,2R)-1-C-(indol-3-yl)glycerol 3-phosphate + L-serine = D-glyceraldehyde 3-phosphate + L-tryptophan + H2O. The protein operates within amino-acid biosynthesis; L-tryptophan biosynthesis; L-tryptophan from chorismate: step 5/5. The alpha subunit is responsible for the aldol cleavage of indoleglycerol phosphate to indole and glyceraldehyde 3-phosphate. The polypeptide is Tryptophan synthase alpha chain (Leptospira borgpetersenii serovar Hardjo-bovis (strain JB197)).